A 178-amino-acid chain; its full sequence is Large ribosomal subunit protein uL6 (178 aa).

The protein belongs to the universal ribosomal protein uL6 family. Part of the 50S ribosomal subunit.

In terms of biological role, this protein binds to the 23S rRNA, and is important in its secondary structure. It is located near the subunit interface in the base of the L7/L12 stalk, and near the tRNA binding site of the peptidyltransferase center. The polypeptide is Large ribosomal subunit protein uL6 (Coxiella burnetii (strain CbuK_Q154) (Coxiella burnetii (strain Q154))).